The following is a 356-amino-acid chain: Protein-glutamate methylesterase/protein-glutamine glutaminase 2 (356 aa).

A Response regulatory domain is found at 4–121 (KVLIVDDSAV…KGFLEESSHE (118 aa)). The residue at position 55 (Asp-55) is a 4-aspartylphosphate. The CheB-type methylesterase domain occupies 169–356 (FATTERIIAI…LELIAKAICR (188 aa)). Active-site residues include Ser-181, His-207, and Asp-303.

Belongs to the CheB family. Post-translationally, phosphorylated by CheA. Phosphorylation of the N-terminal regulatory domain activates the methylesterase activity.

The protein localises to the cytoplasm. The catalysed reaction is [protein]-L-glutamate 5-O-methyl ester + H2O = L-glutamyl-[protein] + methanol + H(+). It carries out the reaction L-glutaminyl-[protein] + H2O = L-glutamyl-[protein] + NH4(+). In terms of biological role, involved in chemotaxis. Part of a chemotaxis signal transduction system that modulates chemotaxis in response to various stimuli. Catalyzes the demethylation of specific methylglutamate residues introduced into the chemoreceptors (methyl-accepting chemotaxis proteins or MCP) by CheR. Also mediates the irreversible deamidation of specific glutamine residues to glutamic acid. The polypeptide is Protein-glutamate methylesterase/protein-glutamine glutaminase 2 (Chromobacterium violaceum (strain ATCC 12472 / DSM 30191 / JCM 1249 / CCUG 213 / NBRC 12614 / NCIMB 9131 / NCTC 9757 / MK)).